Consider the following 167-residue polypeptide: UPF0225 protein VV1358 (167 aa).

This sequence belongs to the UPF0225 family.

The chain is UPF0225 protein VV1358 from Vibrio vulnificus (strain YJ016).